The chain runs to 428 residues: MHDIRAIRENPEAFDRDLERRGLSPLSAELIALDDARKGAVSAAQAAQERRNALSKEIGAAKKAKDEARAAELMAEVARLKEEAPGLDAAQAQAAKVLDERLAAIPNQPKADVPLGADEHGNVEYRRFDSSRARLAEGRQHFELGEATGLMDFEAAAKLSGSRFVVLKGPLARLERALGQFMLDLHTGEHGYTEVVPPVLVRDEAMFGTAQLPKFRDDQFAAGDGFWLIPTAEVPLTNLVRENILAEDELPLRFTALTPCFRAEAGAAGRDTRGMLRQHQFNKVELVSITAPEKSAEEHERMLACAEAVLQKLDLTYRVMTLCTGDMGFASQKTYDIEVWVPGQQTYREISSCSVCGEFQARRMNARYRAKEGRGVGFVHTLNGSGVAVGRALIAVMENYQNPDGSVTIPSVLQPYMGGLNRIEGPNT.

Position 231–233 (231–233 (TAE)) interacts with L-serine. 262-264 (RAE) is an ATP binding site. Glu285 provides a ligand contact to L-serine. 349–352 (EISS) serves as a coordination point for ATP. Ser385 provides a ligand contact to L-serine.

Belongs to the class-II aminoacyl-tRNA synthetase family. Type-1 seryl-tRNA synthetase subfamily. In terms of assembly, homodimer. The tRNA molecule binds across the dimer.

The protein resides in the cytoplasm. It carries out the reaction tRNA(Ser) + L-serine + ATP = L-seryl-tRNA(Ser) + AMP + diphosphate + H(+). The catalysed reaction is tRNA(Sec) + L-serine + ATP = L-seryl-tRNA(Sec) + AMP + diphosphate + H(+). Its pathway is aminoacyl-tRNA biosynthesis; selenocysteinyl-tRNA(Sec) biosynthesis; L-seryl-tRNA(Sec) from L-serine and tRNA(Sec): step 1/1. In terms of biological role, catalyzes the attachment of serine to tRNA(Ser). Is also able to aminoacylate tRNA(Sec) with serine, to form the misacylated tRNA L-seryl-tRNA(Sec), which will be further converted into selenocysteinyl-tRNA(Sec). This chain is Serine--tRNA ligase, found in Methylorubrum populi (strain ATCC BAA-705 / NCIMB 13946 / BJ001) (Methylobacterium populi).